Here is a 467-residue protein sequence, read N- to C-terminus: Probable lipase C1672.09 (467 aa).

Residues 1–17 lie on the Cytoplasmic side of the membrane; it reads MIQLPFIQRLKWEEYMA. Residues 18–38 traverse the membrane as a helical; Signal-anchor for type II membrane protein segment; the sequence is LFLGFFFVIFEKLLSCLAFMI. The Lumenal segment spans residues 39–467; the sequence is HNTLGLFYRS…NHIAPRNKPI (429 aa). Ser66 is modified (phosphoserine). An AB hydrolase-1 domain is found at 127-421; it reads PVVYCHHGLL…SYEHLDMIWA (295 aa). Ser222 acts as the Nucleophile in catalysis. 2 N-linked (GlcNAc...) asparagine glycosylation sites follow: Asn311 and Asn316. Catalysis depends on charge relay system residues Asp389 and His415. Over residues 440-457 the composition is skewed to basic and acidic residues; the sequence is HHPPEHEENDKENREIQK. The interval 440–467 is disordered; it reads HHPPEHEENDKENREIQKNHIAPRNKPI.

This sequence belongs to the AB hydrolase superfamily. Lipase family.

It localises to the cytoplasm. It is found in the membrane. In terms of biological role, probable lipase. This is Probable lipase C1672.09 from Schizosaccharomyces pombe (strain 972 / ATCC 24843) (Fission yeast).